A 737-amino-acid polypeptide reads, in one-letter code: DNA mismatch repair protein MLH1 (737 aa).

2 disordered regions span residues 1-21 (MIDD…ATTI) and 378-416 (TLTS…PAGR). Positions 378-400 (TLTSQKSDSPVSQKPSGQKTQKV) are enriched in polar residues.

Belongs to the DNA mismatch repair MutL/HexB family. As to quaternary structure, heterodimer of MLH1 and PMS1, called MutLalpha, which is the major MMR MutL activity correcting base-base mismatches as well as IDLs. The heterodimer binds double strand DNA independently of a mismatch with positive cooperativity and has more than one DNA binding site. Heterodimer of MLH1 and MLH3, called MutLbeta, which is involved in correction of a specific subset of IDLs when associated with MutSbeta. In terms of tissue distribution, ubiquitous.

It is found in the nucleus. Functionally, involved in DNA mismatch repair (MMR), correcting insertion-deletion loops (IDLs) resulting from DNA replication, DNA damage or from recombination events between non-identical sequences during meiosis. Component of the MutLbeta heterodimer, which probably forms a ternary complex with the MutSbeta heterodimer that initially recognizes the DNA mismatches. This complex is thought to be responsible for directing the downstream MMR events, including strand discrimination, excision, and resynthesis. Plays a major role in promoting meiotic crossing-over and is involved in maintaining the genetic stability of simple sequence repeats by correction of frameshift intermediates. The chain is DNA mismatch repair protein MLH1 (MLH1) from Arabidopsis thaliana (Mouse-ear cress).